The primary structure comprises 443 residues: Tol-Pal system protein TolB (443 aa).

The first 33 residues, 1–33 (MKIGIINTKIRTVFSAFACMIAASLVCTMPARA), serve as a signal peptide directing secretion.

This sequence belongs to the TolB family. The Tol-Pal system is composed of five core proteins: the inner membrane proteins TolA, TolQ and TolR, the periplasmic protein TolB and the outer membrane protein Pal. They form a network linking the inner and outer membranes and the peptidoglycan layer.

It localises to the periplasm. Part of the Tol-Pal system, which plays a role in outer membrane invagination during cell division and is important for maintaining outer membrane integrity. The polypeptide is Tol-Pal system protein TolB (Brucella abortus (strain S19)).